The following is a 67-amino-acid chain: Disintegrin EC3A (67 aa).

A Disintegrin domain is found at 1–65 (NSVHPCCDPV…DCPRNRYKGK (65 aa)). 4 disulfide bridges follow: Cys6-Cys29, Cys20-Cys26, Cys25-Cys50, and Cys38-Cys57. The Cell attachment site; atypical (VGD) motif lies at 42 to 44 (VGD).

It belongs to the venom metalloproteinase (M12B) family. P-II subfamily. P-IIe sub-subfamily. Heterodimer with EC3B; disulfide-linked. Expressed by the venom gland.

The protein resides in the secreted. Its function is as follows. Inhibits adhesion of cells expressing alpha-4/beta-1 (ITGA4/ITGB1) and alpha-4/beta-7 (ITGA4/ITGB7) integrins to the natural ligands vascular cell adhesion molecule 1 (VCAM-1) and mucosal addressin cell adhesion molecule 1 (MADCAM-1). It is also a weaker inhibitor of alpha-5/beta-1 (ITGA5/ITGB1) and alpha-2b/beta-3 (ITGA2B/ITGB3) integrins. The inhibitory activity of EC3 towards alpha-4 integrins is associated with the MLD sequence of EC3B subunit. The ability of EC3 to inhibit ITGA5/ITGB1 resides in both subunits A and B. This Echis carinatus (Saw-scaled viper) protein is Disintegrin EC3A.